The sequence spans 84 residues: Putative UPF0320 protein YAL068W-A (84 aa).

Belongs to the UPF0320 family.

This Saccharomyces cerevisiae (strain ATCC 204508 / S288c) (Baker's yeast) protein is Putative UPF0320 protein YAL068W-A.